Reading from the N-terminus, the 141-residue chain is Nucleoside triphosphatase NudI (141 aa).

The Nudix hydrolase domain occupies 1-141; sequence MRQRTIVCPL…RKTLSLKGLL (141 aa). A Nudix box motif is present at residues 38-59; sequence GGVEPGERIEDALRREIREELG.

It belongs to the Nudix hydrolase family. NudI subfamily. Monomer. It depends on Mg(2+) as a cofactor.

It catalyses the reaction a ribonucleoside 5'-triphosphate + H2O = a ribonucleoside 5'-phosphate + diphosphate + H(+). The catalysed reaction is a 2'-deoxyribonucleoside 5'-triphosphate + H2O = a 2'-deoxyribonucleoside 5'-phosphate + diphosphate + H(+). The enzyme catalyses dUTP + H2O = dUMP + diphosphate + H(+). It carries out the reaction dTTP + H2O = dTMP + diphosphate + H(+). It catalyses the reaction dCTP + H2O = dCMP + diphosphate + H(+). Its function is as follows. Catalyzes the hydrolysis of nucleoside triphosphates, with a preference for pyrimidine deoxynucleoside triphosphates (dUTP, dTTP and dCTP). The sequence is that of Nucleoside triphosphatase NudI from Escherichia fergusonii (strain ATCC 35469 / DSM 13698 / CCUG 18766 / IAM 14443 / JCM 21226 / LMG 7866 / NBRC 102419 / NCTC 12128 / CDC 0568-73).